Here is a 581-residue protein sequence, read N- to C-terminus: Proline--tRNA ligase (581 aa).

It belongs to the class-II aminoacyl-tRNA synthetase family. ProS type 1 subfamily. In terms of assembly, homodimer.

The protein resides in the cytoplasm. The catalysed reaction is tRNA(Pro) + L-proline + ATP = L-prolyl-tRNA(Pro) + AMP + diphosphate. Its function is as follows. Catalyzes the attachment of proline to tRNA(Pro) in a two-step reaction: proline is first activated by ATP to form Pro-AMP and then transferred to the acceptor end of tRNA(Pro). As ProRS can inadvertently accommodate and process non-cognate amino acids such as alanine and cysteine, to avoid such errors it has two additional distinct editing activities against alanine. One activity is designated as 'pretransfer' editing and involves the tRNA(Pro)-independent hydrolysis of activated Ala-AMP. The other activity is designated 'posttransfer' editing and involves deacylation of mischarged Ala-tRNA(Pro). The misacylated Cys-tRNA(Pro) is not edited by ProRS. The chain is Proline--tRNA ligase from Kosmotoga olearia (strain ATCC BAA-1733 / DSM 21960 / TBF 19.5.1).